The following is a 2190-amino-acid chain: Integrator complex subunit 1 (2190 aa).

Positions 1 to 61 (MNRAKPTTVR…GLPSERKRDA (61 aa)) are disordered. Phosphoserine is present on Ser-13. Residues 34 to 44 (GQANESKTAST) are compositionally biased toward polar residues. At Lys-47 the chain carries N6-acetyllysine. Phosphothreonine is present on Thr-83. 3 positions are modified to phosphoserine: Ser-87, Ser-307, and Ser-924. The interval 922-945 (AASGEEDDEGESKEQKAKKRQRQQ) is disordered. A compositionally biased stretch (acidic residues) spans 923-932 (ASGEEDDEGE). Residues 1159–1179 (TATMHILVVHAMVILLTLGPP) traverse the membrane as a helical segment. The tract at residues 1311 to 1334 (SLPPRRDSTEAPKPKSSPEQPIGQ) is disordered. Basic and acidic residues predominate over residues 1314 to 1323 (PRRDSTEAPK). Phosphoserine occurs at positions 1318, 1326, 1327, and 1395.

The protein belongs to the Integrator subunit 1 family. As to quaternary structure, component of the Integrator complex, composed of core subunits INTS1, INTS2, INTS3, INTS4, INTS5, INTS6, INTS7, INTS8, INTS9/RC74, INTS10, INTS11/CPSF3L, INTS12, INTS13, INTS14 and INTS15. The core complex associates with protein phosphatase 2A subunits PPP2CA and PPP2R1A, to form the Integrator-PP2A (INTAC) complex. Interacts with ESRRB, ESRRB is not a core component of the Integrator complex and this association is a bridge for the interaction with the multiprotein complex Integrator; attracts the transcriptional machinery.

It localises to the nucleus. The protein resides in the nucleus membrane. In terms of biological role, component of the integrator complex, a multiprotein complex that terminates RNA polymerase II (Pol II) transcription in the promoter-proximal region of genes. The integrator complex provides a quality checkpoint during transcription elongation by driving premature transcription termination of transcripts that are unfavorably configured for transcriptional elongation: the complex terminates transcription by (1) catalyzing dephosphorylation of the C-terminal domain (CTD) of Pol II subunit POLR2A/RPB1 and SUPT5H/SPT5, (2) degrading the exiting nascent RNA transcript via endonuclease activity and (3) promoting the release of Pol II from bound DNA. The integrator complex is also involved in terminating the synthesis of non-coding Pol II transcripts, such as enhancer RNAs (eRNAs), small nuclear RNAs (snRNAs), telomerase RNAs and long non-coding RNAs (lncRNAs). Within the integrator complex, INTS1 is involved in the post-termination step: INTS1 displaces INTS3 and the SOSS factors, allowing the integrator complex to return to the closed conformation, ready to bind to the paused elongation complex for another termination cycle. Mediates recruitment of cytoplasmic dynein to the nuclear envelope, probably as component of the integrator complex. The chain is Integrator complex subunit 1 from Homo sapiens (Human).